Consider the following 174-residue polypeptide: Shikimate kinase 2 (174 aa).

12–17 contributes to the ATP binding site; that stretch reads GAGKTT. Threonine 16 and aspartate 32 together coordinate Mg(2+). Residues aspartate 34, arginine 58, and glycine 79 each contribute to the substrate site. Residues 112–126 form an LID domain region; it reads EEYPQDTQRPTLTGR. ATP is bound at residue arginine 120. Arginine 139 provides a ligand contact to substrate.

It belongs to the shikimate kinase family. AroL subfamily. In terms of assembly, monomer. It depends on Mg(2+) as a cofactor.

The protein resides in the cytoplasm. The enzyme catalyses shikimate + ATP = 3-phosphoshikimate + ADP + H(+). Its pathway is metabolic intermediate biosynthesis; chorismate biosynthesis; chorismate from D-erythrose 4-phosphate and phosphoenolpyruvate: step 5/7. Functionally, catalyzes the specific phosphorylation of the 3-hydroxyl group of shikimic acid using ATP as a cosubstrate. The polypeptide is Shikimate kinase 2 (Serratia proteamaculans (strain 568)).